A 275-amino-acid polypeptide reads, in one-letter code: Dermonecrotic toxin LruSicTox-alphaIV1 (275 aa).

The active site involves His5. Positions 25 and 27 each coordinate Mg(2+). The active-site Nucleophile is the His41. 2 disulfide bridges follow: Cys45–Cys51 and Cys47–Cys192. Asp85 contacts Mg(2+).

Belongs to the arthropod phospholipase D family. Class II subfamily. It depends on Mg(2+) as a cofactor. As to expression, expressed by the venom gland.

The protein localises to the secreted. It catalyses the reaction an N-(acyl)-sphingosylphosphocholine = an N-(acyl)-sphingosyl-1,3-cyclic phosphate + choline. The catalysed reaction is an N-(acyl)-sphingosylphosphoethanolamine = an N-(acyl)-sphingosyl-1,3-cyclic phosphate + ethanolamine. It carries out the reaction a 1-acyl-sn-glycero-3-phosphocholine = a 1-acyl-sn-glycero-2,3-cyclic phosphate + choline. The enzyme catalyses a 1-acyl-sn-glycero-3-phosphoethanolamine = a 1-acyl-sn-glycero-2,3-cyclic phosphate + ethanolamine. Its function is as follows. Dermonecrotic toxins cleave the phosphodiester linkage between the phosphate and headgroup of certain phospholipids (sphingolipid and lysolipid substrates), forming an alcohol (often choline) and a cyclic phosphate. This toxin acts on sphingomyelin (SM). It may also act on ceramide phosphoethanolamine (CPE), lysophosphatidylcholine (LPC) and lysophosphatidylethanolamine (LPE), but not on lysophosphatidylserine (LPS), and lysophosphatidylglycerol (LPG). It acts by transphosphatidylation, releasing exclusively cyclic phosphate products as second products. Induces dermonecrosis, hemolysis, increased vascular permeability, edema, inflammatory response, and platelet aggregation. The polypeptide is Dermonecrotic toxin LruSicTox-alphaIV1 (Loxosceles rufescens (Mediterranean recluse spider)).